Consider the following 538-residue polypeptide: MFRRNLITSAILLMAPLAFSAQSLAESLTVEQRLELLEKALRETQSELKKYKDEEKKKYTPATVNRSVSTNDQGYAANPFPTSSAAKPDAVLVKNEEKNASETGSIYSSMTLKDFSKFVKDEIGFSYNGYYRSGWGTASHGSPKSWAIGSLGRFGNEYSGWFDLQLKQRVYNENGKRVDAVVMMDGNVGQQYSTGWFGDNAGGENFMQFSDMYVTTKGFLPFAPEADFWVGKHGAPKIEIQILDWKTQRTDAAAGVGLENWKVGPGKIDIALVREDVDDYDRSLQNKQQINTNTIDLRYKDIPLWDKATLMVSGRYVTANESASEKDNQDNNGYYDWKDTWMFGTSLTQKFDKGGFNEFSFLVANNSIASNFGRYAGASPFTTFNGRYYGDHTGGTAVRLTSQGEAYIGDHFIVANAIVYSFGNDIYSYETGAHSDFESIRAVVRPAYIWDQYNQTGVELGYFTQQNKDANSNKFNESGYKTTLFHTFKVNTSMLTSRPEIRFYATYIKALENELDGFTFGDNKDDQFAVGAQAEIWW.

An N-terminal signal peptide occupies residues Met1 to Ala25. Residues Lys52–Thr82 are disordered. Over residues Ala62–Gln73 the composition is skewed to polar residues.

This sequence belongs to the porin LamB (TC 1.B.3) family.

It is found in the cell outer membrane. Its function is as follows. May be a sugar porin with a broad carbohydrate specificity. In Escherichia coli O139:H28 (strain E24377A / ETEC), this protein is Putative outer membrane porin BglH (bglH).